The sequence spans 368 residues: MAQDWAGFSEEELRRLKQNKDPFEPQRRIPVKKTRQQLQREKALLEQSQKLGLQDGSASLLPEQLLSAPKQRANSQKPRSPSPVAPSPLTPTSSSGDGKLPGVGSQPQEPGLENSHHGHKSAEVRAPKPDCKVEKKKMELQEKSRWEVLQQEQRLMEEKNKRKKALLAQAIAERSKKTQAETIKLKRIQKELQALDDMVSADIGILRNRIDQASLEYSYARKRFDRAEAEYITAKLDLQRKTETKEQLTEHLCTIIQQNELRKAKKLEELMQQLDVQADEEALQLEVEVEQLLREQEAEAAKQMASVERLCPPDGESVSSELAEENNEPQKQAPSPETDKPGKCCSSSPHRLDCPDPGAKNFSAAVAT.

Disordered regions lie at residues 1-43, 55-133, and 302-368; these read MAQD…REKA, DGSA…DCKV, and KQMA…AVAT. The segment covering 11–27 has biased composition (basic and acidic residues); sequence EELRRLKQNKDPFEPQR. A compositionally biased stretch (pro residues) spans 80 to 89; sequence SPSPVAPSPL. A compositionally biased stretch (basic and acidic residues) spans 114 to 133; that stretch reads NSHHGHKSAEVRAPKPDCKV. A coiled-coil region spans residues 145–310; the sequence is RWEVLQQEQR…AKQMASVERL (166 aa). Residues 188-368 form a necessary for interaction with RCHY1 region; sequence IQKELQALDD…AKNFSAAVAT (181 aa).

The protein belongs to the GORAB family. In terms of assembly, interacts with RCHY1. Interacts with SCYL1 and RAB6A/RAB6. As to expression, expressed in small intestine, kidney, skeletal muscle, lung, spleen, brain and heart. High expression is observed in osteoblasts and skin; also expressed in osteoclasts albeit at lower levels.

It localises to the cytoplasm. The protein resides in the golgi apparatus. In Mus musculus (Mouse), this protein is RAB6-interacting golgin (Gorab).